The following is a 73-amino-acid chain: Large ribosomal subunit protein bL31 (73 aa).

Belongs to the bacterial ribosomal protein bL31 family. Type A subfamily. Part of the 50S ribosomal subunit.

Functionally, binds the 23S rRNA. This chain is Large ribosomal subunit protein bL31, found in Mesorhizobium japonicum (strain LMG 29417 / CECT 9101 / MAFF 303099) (Mesorhizobium loti (strain MAFF 303099)).